A 391-amino-acid polypeptide reads, in one-letter code: Histidinol-phosphate aminotransferase (391 aa).

Residue Lys-245 is modified to N6-(pyridoxal phosphate)lysine.

The protein belongs to the class-II pyridoxal-phosphate-dependent aminotransferase family. Histidinol-phosphate aminotransferase subfamily. In terms of assembly, homodimer. Pyridoxal 5'-phosphate serves as cofactor.

It carries out the reaction L-histidinol phosphate + 2-oxoglutarate = 3-(imidazol-4-yl)-2-oxopropyl phosphate + L-glutamate. Its pathway is amino-acid biosynthesis; L-histidine biosynthesis; L-histidine from 5-phospho-alpha-D-ribose 1-diphosphate: step 7/9. This chain is Histidinol-phosphate aminotransferase, found in Bifidobacterium adolescentis (strain ATCC 15703 / DSM 20083 / NCTC 11814 / E194a).